We begin with the raw amino-acid sequence, 306 residues long: Ribosomal RNA small subunit methyltransferase H (306 aa).

S-adenosyl-L-methionine contacts are provided by residues 36 to 38 (GGH), aspartate 56, phenylalanine 80, aspartate 97, and glutamine 104. Residues 280–306 (ASEEEVAGNPRSRSAVMRVAERTGEAA) form a disordered region.

Belongs to the methyltransferase superfamily. RsmH family.

The protein localises to the cytoplasm. The catalysed reaction is cytidine(1402) in 16S rRNA + S-adenosyl-L-methionine = N(4)-methylcytidine(1402) in 16S rRNA + S-adenosyl-L-homocysteine + H(+). Specifically methylates the N4 position of cytidine in position 1402 (C1402) of 16S rRNA. This chain is Ribosomal RNA small subunit methyltransferase H, found in Polaromonas naphthalenivorans (strain CJ2).